We begin with the raw amino-acid sequence, 422 residues long: Serine hydroxymethyltransferase (422 aa).

(6S)-5,6,7,8-tetrahydrofolate-binding positions include Leu118 and 122–124 (GHL). Lys227 carries the N6-(pyridoxal phosphate)lysine modification. Residue Glu242 coordinates (6S)-5,6,7,8-tetrahydrofolate.

It belongs to the SHMT family. Homodimer. It depends on pyridoxal 5'-phosphate as a cofactor.

Its subcellular location is the cytoplasm. It catalyses the reaction (6R)-5,10-methylene-5,6,7,8-tetrahydrofolate + glycine + H2O = (6S)-5,6,7,8-tetrahydrofolate + L-serine. Its pathway is one-carbon metabolism; tetrahydrofolate interconversion. It participates in amino-acid biosynthesis; glycine biosynthesis; glycine from L-serine: step 1/1. Functionally, catalyzes the reversible interconversion of serine and glycine with tetrahydrofolate (THF) serving as the one-carbon carrier. This reaction serves as the major source of one-carbon groups required for the biosynthesis of purines, thymidylate, methionine, and other important biomolecules. Also exhibits THF-independent aldolase activity toward beta-hydroxyamino acids, producing glycine and aldehydes, via a retro-aldol mechanism. The protein is Serine hydroxymethyltransferase of Sulfurihydrogenibium sp. (strain YO3AOP1).